A 290-amino-acid chain; its full sequence is UPF0761 membrane protein CKO_03126 (290 aa).

6 helical membrane passes run 44 to 64 (LLSLVPLIAVVFALFAAFPMF), 104 to 124 (VGACGLIVTALLLMYAIDSAL), 140 to 160 (FAVYWMILTLGPLLAGASLAI), 183 to 203 (VFPLILSWISFWLLYSIVPTT), 210 to 230 (AVVGAFVAAVLFEAGKKGFAL), and 244 to 264 (VLAVIPILFVWVYWTWCIVLL).

It belongs to the UPF0761 family.

It is found in the cell inner membrane. In Citrobacter koseri (strain ATCC BAA-895 / CDC 4225-83 / SGSC4696), this protein is UPF0761 membrane protein CKO_03126.